We begin with the raw amino-acid sequence, 385 residues long: uncharacterized protein (385 aa).

The next 8 membrane-spanning stretches (helical) occupy residues 17–37, 72–92, 107–127, 155–175, 191–211, 295–315, 326–346, and 354–374; these read ILII…FIFT, TELM…WFLL, WILK…KCIT, ICLI…FYII, WIQA…LVLL, AFPS…FYFL, ITLL…IVVN, and ITFT…FNSF.

The protein localises to the membrane. This is an uncharacterized protein from Mycoplasma capricolum subsp. capricolum (strain California kid / ATCC 27343 / NCTC 10154).